A 329-amino-acid polypeptide reads, in one-letter code: Ferredoxin--NADP reductase (329 aa).

Positions 28, 36, 41, 81, 115, 282, and 323 each coordinate FAD.

Belongs to the ferredoxin--NADP reductase type 2 family. As to quaternary structure, homodimer. The cofactor is FAD.

It carries out the reaction 2 reduced [2Fe-2S]-[ferredoxin] + NADP(+) + H(+) = 2 oxidized [2Fe-2S]-[ferredoxin] + NADPH. The polypeptide is Ferredoxin--NADP reductase (Anaplasma marginale (strain St. Maries)).